Here is a 179-residue protein sequence, read N- to C-terminus: Acireductone dioxygenase (179 aa).

Fe(2+)-binding residues include H100, H102, E106, and H145. Positions 100, 102, 106, and 145 each coordinate Ni(2+).

This sequence belongs to the acireductone dioxygenase (ARD) family. In terms of assembly, monomer. The cofactor is Fe(2+). Requires Ni(2+) as cofactor.

It carries out the reaction 1,2-dihydroxy-5-(methylsulfanyl)pent-1-en-3-one + O2 = 3-(methylsulfanyl)propanoate + CO + formate + 2 H(+). The enzyme catalyses 1,2-dihydroxy-5-(methylsulfanyl)pent-1-en-3-one + O2 = 4-methylsulfanyl-2-oxobutanoate + formate + 2 H(+). Its pathway is amino-acid biosynthesis; L-methionine biosynthesis via salvage pathway; L-methionine from S-methyl-5-thio-alpha-D-ribose 1-phosphate: step 5/6. In terms of biological role, catalyzes 2 different reactions between oxygen and the acireductone 1,2-dihydroxy-3-keto-5-methylthiopentene (DHK-MTPene) depending upon the metal bound in the active site. Fe-containing acireductone dioxygenase (Fe-ARD) produces formate and 2-keto-4-methylthiobutyrate (KMTB), the alpha-ketoacid precursor of methionine in the methionine recycle pathway. Ni-containing acireductone dioxygenase (Ni-ARD) produces methylthiopropionate, carbon monoxide and formate, and does not lie on the methionine recycle pathway. The protein is Acireductone dioxygenase of Bacillus licheniformis (strain ATCC 14580 / DSM 13 / JCM 2505 / CCUG 7422 / NBRC 12200 / NCIMB 9375 / NCTC 10341 / NRRL NRS-1264 / Gibson 46).